A 328-amino-acid polypeptide reads, in one-letter code: Anthranilate phosphoribosyltransferase (328 aa).

5-phospho-alpha-D-ribose 1-diphosphate contacts are provided by residues glycine 79, 82 to 83 (GD), threonine 87, 89 to 92 (NIST), 107 to 115 (KHGNYAVSS), and serine 119. Glycine 79 is an anthranilate binding site. Serine 91 is a Mg(2+) binding site. Residue asparagine 110 participates in anthranilate binding. Anthranilate is bound at residue arginine 165. 2 residues coordinate Mg(2+): aspartate 223 and glutamate 224.

It belongs to the anthranilate phosphoribosyltransferase family. Homodimer. The cofactor is Mg(2+).

It catalyses the reaction N-(5-phospho-beta-D-ribosyl)anthranilate + diphosphate = 5-phospho-alpha-D-ribose 1-diphosphate + anthranilate. It participates in amino-acid biosynthesis; L-tryptophan biosynthesis; L-tryptophan from chorismate: step 2/5. Catalyzes the transfer of the phosphoribosyl group of 5-phosphorylribose-1-pyrophosphate (PRPP) to anthranilate to yield N-(5'-phosphoribosyl)-anthranilate (PRA). The protein is Anthranilate phosphoribosyltransferase of Cytophaga hutchinsonii (strain ATCC 33406 / DSM 1761 / CIP 103989 / NBRC 15051 / NCIMB 9469 / D465).